We begin with the raw amino-acid sequence, 217 residues long: 3,4-dihydroxy-2-butanone 4-phosphate synthase (217 aa).

D-ribulose 5-phosphate-binding positions include 37–38 (RE), Asp-42, 150–154 (RGGHT), and Glu-174. Glu-38 contacts Mg(2+). Mg(2+) is bound at residue His-153.

It belongs to the DHBP synthase family. Homodimer. The cofactor is Mg(2+). Mn(2+) is required as a cofactor.

It carries out the reaction D-ribulose 5-phosphate = (2S)-2-hydroxy-3-oxobutyl phosphate + formate + H(+). Its pathway is cofactor biosynthesis; riboflavin biosynthesis; 2-hydroxy-3-oxobutyl phosphate from D-ribulose 5-phosphate: step 1/1. Catalyzes the conversion of D-ribulose 5-phosphate to formate and 3,4-dihydroxy-2-butanone 4-phosphate. In Salmonella arizonae (strain ATCC BAA-731 / CDC346-86 / RSK2980), this protein is 3,4-dihydroxy-2-butanone 4-phosphate synthase.